The following is a 431-amino-acid chain: Histidinol dehydrogenase (431 aa).

NAD(+)-binding residues include tyrosine 127, glutamine 185, and asparagine 208. Substrate contacts are provided by serine 234, glutamine 256, and histidine 259. Zn(2+) contacts are provided by glutamine 256 and histidine 259. Catalysis depends on proton acceptor residues glutamate 323 and histidine 324. Substrate is bound by residues histidine 324, aspartate 357, glutamate 411, and histidine 416. Aspartate 357 is a binding site for Zn(2+). Histidine 416 is a binding site for Zn(2+).

Belongs to the histidinol dehydrogenase family. Zn(2+) is required as a cofactor.

It carries out the reaction L-histidinol + 2 NAD(+) + H2O = L-histidine + 2 NADH + 3 H(+). It functions in the pathway amino-acid biosynthesis; L-histidine biosynthesis; L-histidine from 5-phospho-alpha-D-ribose 1-diphosphate: step 9/9. Functionally, catalyzes the sequential NAD-dependent oxidations of L-histidinol to L-histidinaldehyde and then to L-histidine. The polypeptide is Histidinol dehydrogenase (Vibrio parahaemolyticus serotype O3:K6 (strain RIMD 2210633)).